The following is a 210-amino-acid chain: Fibrillarin-like rRNA/tRNA 2'-O-methyltransferase (210 aa).

The disordered stretch occupies residues Met1 to Trp34. S-adenosyl-L-methionine-binding positions include Thr71 to Thr72, Glu87 to Phe88, Asp112 to Ala113, and Asp132 to Thr135.

This sequence belongs to the methyltransferase superfamily. Fibrillarin family. In terms of assembly, interacts with nop5. Component of box C/D small ribonucleoprotein (sRNP) particles that contain rpl7ae, FlpA and nop5, plus a guide RNA.

In terms of biological role, involved in pre-rRNA and tRNA processing. Utilizes the methyl donor S-adenosyl-L-methionine to catalyze the site-specific 2'-hydroxyl methylation of ribose moieties in rRNA and tRNA. Site specificity is provided by a guide RNA that base pairs with the substrate. Methylation occurs at a characteristic distance from the sequence involved in base pairing with the guide RNA. The sequence is that of Fibrillarin-like rRNA/tRNA 2'-O-methyltransferase from Haloarcula marismortui (strain ATCC 43049 / DSM 3752 / JCM 8966 / VKM B-1809) (Halobacterium marismortui).